A 162-amino-acid chain; its full sequence is Transcription elongation factor GreA (162 aa).

The stretch at 45 to 74 (ENAEYEAAREKQAFIEGRIKELEDMTARAE) forms a coiled coil.

This sequence belongs to the GreA/GreB family.

Necessary for efficient RNA polymerase transcription elongation past template-encoded arresting sites. The arresting sites in DNA have the property of trapping a certain fraction of elongating RNA polymerases that pass through, resulting in locked ternary complexes. Cleavage of the nascent transcript by cleavage factors such as GreA or GreB allows the resumption of elongation from the new 3'terminus. GreA releases sequences of 2 to 3 nucleotides. The polypeptide is Transcription elongation factor GreA (Rickettsia felis (strain ATCC VR-1525 / URRWXCal2) (Rickettsia azadi)).